The sequence spans 85 residues: uncharacterized protein (85 aa).

The next 2 helical transmembrane spans lie at 12–34 (ICLSVVTFSTSYSLDAGVVVLAF) and 49–71 (IPEFLWVTWQSFIKVLSLLNGFV).

It localises to the cell membrane. This is an uncharacterized protein from Archaeoglobus fulgidus (strain ATCC 49558 / DSM 4304 / JCM 9628 / NBRC 100126 / VC-16).